Here is a 466-residue protein sequence, read N- to C-terminus: Ribulose bisphosphate carboxylase large chain (466 aa).

An N6,N6,N6-trimethyllysine modification is found at lysine 5. The substrate site is built by asparagine 114 and threonine 164. Lysine 166 serves as the catalytic Proton acceptor. Substrate is bound at residue lysine 168. 3 residues coordinate Mg(2+): lysine 192, aspartate 194, and glutamate 195. Lysine 192 is modified (N6-carboxylysine). Histidine 285 acts as the Proton acceptor in catalysis. Substrate is bound by residues arginine 286, histidine 318, and serine 370.

It belongs to the RuBisCO large chain family. Type I subfamily. Heterohexadecamer of 8 large chains and 8 small chains; disulfide-linked. The disulfide link is formed within the large subunit homodimers. Mg(2+) serves as cofactor. In terms of processing, the disulfide bond which can form in the large chain dimeric partners within the hexadecamer appears to be associated with oxidative stress and protein turnover.

The protein localises to the plastid. It localises to the chloroplast. The catalysed reaction is 2 (2R)-3-phosphoglycerate + 2 H(+) = D-ribulose 1,5-bisphosphate + CO2 + H2O. It carries out the reaction D-ribulose 1,5-bisphosphate + O2 = 2-phosphoglycolate + (2R)-3-phosphoglycerate + 2 H(+). In terms of biological role, ruBisCO catalyzes two reactions: the carboxylation of D-ribulose 1,5-bisphosphate, the primary event in carbon dioxide fixation, as well as the oxidative fragmentation of the pentose substrate in the photorespiration process. Both reactions occur simultaneously and in competition at the same active site. This Tropaeolum majus (Common nasturtium) protein is Ribulose bisphosphate carboxylase large chain.